The chain runs to 398 residues: MKINSPKDLDFKPGSSVFLRCDFNVPLDEFGNITDDRRIRMALPTIKYLLDNECKIVIASHLGRPKGEFDEKYSLKPVAKRLSHLLKQDVIMAKDVVGPDAKEKASKLQNGEILLLENVRFDPRETKNDEGFAKELSEFGEFYINDAFGVSHRAHASVEAITRFYDNEHKAAGFLLLKEINFFYKLLENPVRPFVAVVGGSKVSGKLQALINLLPKVDKIIIGGGMAFTFLKAMGYNVGNSLVEDELIDEALKIMAEAKRLGVKFYLPVDIVIADKFAEDAMVKYVTAQEIPDGWMGLDIGPASVRLFGEVLWDAQTILWNGPMGVFEMDKFSRGTFKISHEIARSHGIKVVGGGDTADAVQRAGDDEEMTFISTGGGASLELLEGKKLPGIAALEIK.

Substrate contacts are provided by residues 22-24 (DFN), R38, 61-64 (HLGR), R120, and R153. ATP-binding positions include K206, G297, E328, and 354–357 (GGDT).

It belongs to the phosphoglycerate kinase family. In terms of assembly, monomer.

The protein resides in the cytoplasm. It catalyses the reaction (2R)-3-phosphoglycerate + ATP = (2R)-3-phospho-glyceroyl phosphate + ADP. Its pathway is carbohydrate degradation; glycolysis; pyruvate from D-glyceraldehyde 3-phosphate: step 2/5. The polypeptide is Phosphoglycerate kinase (Nautilia profundicola (strain ATCC BAA-1463 / DSM 18972 / AmH)).